The chain runs to 439 residues: SET domain-containing protein 4 (439 aa).

Residues 1-19 are compositionally biased toward basic residues; the sequence is MQRRRGRTERARKRRRRSS. The segment at 1 to 25 is disordered; it reads MQRRRGRTERARKRRRRSSGSRAVN. Residues 47–272 enclose the SET domain; sequence TDLVPASFPG…KHQEVFICYG (226 aa). Tyrosine 271 contacts S-adenosyl-L-methionine.

Belongs to the class V-like SAM-binding methyltransferase superfamily. SETD4 family. In terms of assembly, forms a ternary complex with TBK1 and ZNF268; the interaction with TBK1 is ZNF268-dependent and leads to TBK1 monomethylation. Expressed in the forebrain subventricular zone, in quiescent neural stem cells.

It localises to the cytoplasm. Its subcellular location is the cytosol. It is found in the nucleus. It carries out the reaction L-lysyl(4)-[histone H3] + S-adenosyl-L-methionine = N(6)-methyl-L-lysyl(4)-[histone H3] + S-adenosyl-L-homocysteine + H(+). The enzyme catalyses N(6)-methyl-L-lysyl(4)-[histone H3] + S-adenosyl-L-methionine = N(6),N(6)-dimethyl-L-lysyl(4)-[histone H3] + S-adenosyl-L-homocysteine + H(+). The catalysed reaction is L-lysyl(20)-[histone H4] + S-adenosyl-L-methionine = N(6)-methyl-L-lysyl(20)-[histone H4] + S-adenosyl-L-homocysteine + H(+). It catalyses the reaction N(6)-methyl-L-lysyl(20)-[histone H4] + S-adenosyl-L-methionine = N(6),N(6)-dimethyl-L-lysyl(20)-[histone H4] + S-adenosyl-L-homocysteine + H(+). It carries out the reaction N(6),N(6)-dimethyl-L-lysyl(20)-[histone H4] + S-adenosyl-L-methionine = N(6),N(6),N(6)-trimethyl-L-lysyl(20)-[histone H4] + S-adenosyl-L-homocysteine + H(+). The enzyme catalyses L-lysyl-[protein] + S-adenosyl-L-methionine = N(6)-methyl-L-lysyl-[protein] + S-adenosyl-L-homocysteine + H(+). Protein-lysine N-methyltransferase that methylates both histones and non-histone proteins. Via its catalytic activity, regulates many processes, including cell proliferation, cell differentiation, inflammatory response and apoptosis. Regulates the inflammatory response by mediating mono- and dimethylation of 'Lys-4' of histone H3 (H3K4me1 and H3K4me2, respectively), leading to activate the transcription of pro-inflammatory cytokines IL6 and TNF-alpha. Also involved in the regulation of stem cell quiescence by catalyzing the trimethylation of 'Lys-20' of histone H4 (H4K20me3), thereby promoting heterochromatin formation. In the brain, epigenetically controls quiescence of neural stem cells for sustaining a protected neural stem cell population and maintaining a stem cell reservoir for neurogenesis. Involved in proliferation, migration, paracrine and myogenic differentiation of bone marrow mesenchymal stem cells (BMSCs). Through the catalysis of XRCC5/Ku70 trimethylation, regulates BAX-mediated apoptosis. SETD4-catalyzed XRCC5 methylation results in XRCC5 translocation to the cytoplasm, where it interacts with BAX, sequestering it from the mitochondria, hence preventing BAX-mediated apoptosis. This Mus musculus (Mouse) protein is SET domain-containing protein 4.